Consider the following 244-residue polypeptide: Extracellular superoxide dismutase [Cu-Zn] (244 aa).

An N-terminal signal peptide occupies residues 1 to 15 (MVAFLFCNLLLVACG). Disulfide bonds link cysteine 70-cysteine 215 and cysteine 132-cysteine 214. An N-linked (GlcNAc...) asparagine glycan is attached at asparagine 114. Cu cation contacts are provided by histidine 121, histidine 123, and histidine 138. The Zn(2+) site is built by histidine 138, histidine 146, histidine 149, and aspartate 152. Position 188 (histidine 188) interacts with Cu cation. The interval 224 to 244 (AWESQTKERKKRRRESECKTT) is disordered.

The protein belongs to the Cu-Zn superoxide dismutase family. In terms of assembly, homodimer. Interacts with ATP7A; this interaction is copper-dependent and is required for SOD3 activity. Requires Cu cation as cofactor. Zn(2+) serves as cofactor.

The protein resides in the secreted. It is found in the extracellular space. The protein localises to the golgi apparatus. Its subcellular location is the trans-Golgi network. It carries out the reaction 2 superoxide + 2 H(+) = H2O2 + O2. Functionally, protect the extracellular space from toxic effect of reactive oxygen intermediates by converting superoxide radicals into hydrogen peroxide and oxygen. This chain is Extracellular superoxide dismutase [Cu-Zn] (Sod3), found in Rattus norvegicus (Rat).